The primary structure comprises 764 residues: 5-methyltetrahydropteroyltriglutamate--homocysteine methyltransferase (764 aa).

5-methyltetrahydropteroyltri-L-glutamate contacts are provided by residues 16–19 (RELK) and lysine 117. L-homocysteine is bound by residues 442–444 (IGS) and glutamate 495. L-methionine-binding positions include 442 to 444 (IGS) and glutamate 495. Residues 526 to 527 (RC) and tryptophan 572 each bind 5-methyltetrahydropteroyltri-L-glutamate. Aspartate 610 provides a ligand contact to L-homocysteine. Aspartate 610 is an L-methionine binding site. Glutamate 616 lines the 5-methyltetrahydropteroyltri-L-glutamate pocket. Histidine 652, cysteine 654, and glutamate 676 together coordinate Zn(2+). The active-site Proton donor is histidine 705. Position 737 (cysteine 737) interacts with Zn(2+).

This sequence belongs to the vitamin-B12 independent methionine synthase family. Requires Zn(2+) as cofactor.

It catalyses the reaction 5-methyltetrahydropteroyltri-L-glutamate + L-homocysteine = tetrahydropteroyltri-L-glutamate + L-methionine. Its pathway is amino-acid biosynthesis; L-methionine biosynthesis via de novo pathway; L-methionine from L-homocysteine (MetE route): step 1/1. Functionally, catalyzes the transfer of a methyl group from 5-methyltetrahydrofolate to homocysteine resulting in methionine formation. In Bordetella petrii (strain ATCC BAA-461 / DSM 12804 / CCUG 43448), this protein is 5-methyltetrahydropteroyltriglutamate--homocysteine methyltransferase.